Here is a 386-residue protein sequence, read N- to C-terminus: Putative F-box/kelch-repeat protein At4g11750 (386 aa).

The 47-residue stretch at 5–51 (PVDLPYIPDDLLLNCLARVSRLYYPILSLVSKRFRSLVASLELYEIR) folds into the F-box domain. 3 Kelch repeats span residues 187-236 (KIYV…VYDG), 238-285 (LYLF…YGRS), and 287-324 (VLMW…GYSG).

The sequence is that of Putative F-box/kelch-repeat protein At4g11750 from Arabidopsis thaliana (Mouse-ear cress).